A 323-amino-acid polypeptide reads, in one-letter code: tRNA U34 carboxymethyltransferase (323 aa).

Carboxy-S-adenosyl-L-methionine is bound by residues Lys-93, Trp-107, Lys-112, Gly-132, 154–156, 182–183, Met-197, Tyr-201, and Arg-316; these read DPS and VE.

The protein belongs to the class I-like SAM-binding methyltransferase superfamily. CmoB family. In terms of assembly, homotetramer.

It carries out the reaction carboxy-S-adenosyl-L-methionine + 5-hydroxyuridine(34) in tRNA = 5-carboxymethoxyuridine(34) in tRNA + S-adenosyl-L-homocysteine + H(+). Its function is as follows. Catalyzes carboxymethyl transfer from carboxy-S-adenosyl-L-methionine (Cx-SAM) to 5-hydroxyuridine (ho5U) to form 5-carboxymethoxyuridine (cmo5U) at position 34 in tRNAs. This chain is tRNA U34 carboxymethyltransferase, found in Pseudoalteromonas atlantica (strain T6c / ATCC BAA-1087).